The chain runs to 247 residues: 2,3-bisphosphoglycerate-dependent phosphoglycerate mutase (247 aa).

Residues 8–15, 21–22, Arg-60, 87–90, Lys-98, 114–115, and 183–184 contribute to the substrate site; these read RHGESTWN, TG, ERHY, RR, and GN. His-9 (tele-phosphohistidine intermediate) is an active-site residue. Residue Glu-87 is the Proton donor/acceptor of the active site.

This sequence belongs to the phosphoglycerate mutase family. BPG-dependent PGAM subfamily. As to quaternary structure, homodimer.

It carries out the reaction (2R)-2-phosphoglycerate = (2R)-3-phosphoglycerate. Its pathway is carbohydrate degradation; glycolysis; pyruvate from D-glyceraldehyde 3-phosphate: step 3/5. Functionally, catalyzes the interconversion of 2-phosphoglycerate and 3-phosphoglycerate. This Delftia acidovorans (strain DSM 14801 / SPH-1) protein is 2,3-bisphosphoglycerate-dependent phosphoglycerate mutase.